The sequence spans 567 residues: Formate--tetrahydrofolate ligase (567 aa).

Position 76 to 83 (76 to 83) interacts with ATP; sequence TPAGEGKT.

This sequence belongs to the formate--tetrahydrofolate ligase family.

It carries out the reaction (6S)-5,6,7,8-tetrahydrofolate + formate + ATP = (6R)-10-formyltetrahydrofolate + ADP + phosphate. The protein operates within one-carbon metabolism; tetrahydrofolate interconversion. The chain is Formate--tetrahydrofolate ligase from Sinorhizobium medicae (strain WSM419) (Ensifer medicae).